A 251-amino-acid chain; its full sequence is Triosephosphate isomerase (251 aa).

9 to 11 (NWK) is a binding site for substrate. Residue histidine 95 is the Electrophile of the active site. Glutamate 167 acts as the Proton acceptor in catalysis. Substrate is bound by residues glycine 173, serine 212, and 233-234 (GG).

The protein belongs to the triosephosphate isomerase family. In terms of assembly, homodimer.

Its subcellular location is the cytoplasm. The catalysed reaction is D-glyceraldehyde 3-phosphate = dihydroxyacetone phosphate. Its pathway is carbohydrate biosynthesis; gluconeogenesis. It functions in the pathway carbohydrate degradation; glycolysis; D-glyceraldehyde 3-phosphate from glycerone phosphate: step 1/1. Its function is as follows. Involved in the gluconeogenesis. Catalyzes stereospecifically the conversion of dihydroxyacetone phosphate (DHAP) to D-glyceraldehyde-3-phosphate (G3P). This Pseudomonas fluorescens (strain ATCC BAA-477 / NRRL B-23932 / Pf-5) protein is Triosephosphate isomerase.